The primary structure comprises 318 residues: Probable mitochondrial 2-oxoglutarate/malate carrier protein (318 aa).

3 Solcar repeats span residues 22-111 (QSQL…IKDI), 119-210 (LPFT…TKQL), and 219-309 (DDIK…LNIL). The next 6 membrane-spanning stretches (helical) occupy residues 28-48 (FVIGGLAGMLSSAFTHPIDSL), 79-99 (GFFTLYKGLSASLLRQATYTT), 125-145 (IMVGMLSGAGGAIVGTPADLT), 185-205 (GCSPNLIRAMFMTAGQVSSYD), 225-245 (LIASTTAAFVAAVATSPLDVI), and 281-301 (FYKGFNPYFMRLGPQTILTFI).

It belongs to the mitochondrial carrier (TC 2.A.29) family.

The protein resides in the mitochondrion inner membrane. Functionally, mitochondrial solute carriers shuttle metabolites, nucleotides, and cofactors through the mitochondrial inner membrane. Catalyzes the transport of 2-oxoglutarate across the inner mitochondrial membrane in an electroneutral exchange for malate or other dicarboxylic acids, and plays an important role in several metabolic processes, including the malate-aspartate shuttle, the oxoglutarate/isocitrate shuttle, in gluconeogenesis from lactate, and in nitrogen metabolism. The polypeptide is Probable mitochondrial 2-oxoglutarate/malate carrier protein (ucpC) (Dictyostelium discoideum (Social amoeba)).